A 211-amino-acid chain; its full sequence is Large ribosomal subunit protein uL3 (211 aa).

The segment at 122 to 156 is disordered; the sequence is NQKRNNFGRGPMSHGSKNHRAPGSIGAGTTPGRVY.

Belongs to the universal ribosomal protein uL3 family. In terms of assembly, part of the 50S ribosomal subunit. Forms a cluster with proteins L14 and L19.

One of the primary rRNA binding proteins, it binds directly near the 3'-end of the 23S rRNA, where it nucleates assembly of the 50S subunit. In Nostoc sp. (strain PCC 7120 / SAG 25.82 / UTEX 2576), this protein is Large ribosomal subunit protein uL3.